A 284-amino-acid polypeptide reads, in one-letter code: ATP phosphoribosyltransferase (284 aa).

This sequence belongs to the ATP phosphoribosyltransferase family. Long subfamily. Requires Mg(2+) as cofactor.

The protein localises to the cytoplasm. The catalysed reaction is 1-(5-phospho-beta-D-ribosyl)-ATP + diphosphate = 5-phospho-alpha-D-ribose 1-diphosphate + ATP. It functions in the pathway amino-acid biosynthesis; L-histidine biosynthesis; L-histidine from 5-phospho-alpha-D-ribose 1-diphosphate: step 1/9. With respect to regulation, feedback inhibited by histidine. Catalyzes the condensation of ATP and 5-phosphoribose 1-diphosphate to form N'-(5'-phosphoribosyl)-ATP (PR-ATP). Has a crucial role in the pathway because the rate of histidine biosynthesis seems to be controlled primarily by regulation of HisG enzymatic activity. This is ATP phosphoribosyltransferase from Pseudarthrobacter chlorophenolicus (strain ATCC 700700 / DSM 12829 / CIP 107037 / JCM 12360 / KCTC 9906 / NCIMB 13794 / A6) (Arthrobacter chlorophenolicus).